We begin with the raw amino-acid sequence, 166 residues long: Thioredoxin, mitochondrial (166 aa).

A mitochondrion-targeting transit peptide spans 1–59 (MAQRLLLRRFLTSIISGKPSQSRWAPVASRALQTPQYSPGYLTVTPSQARSIYTTRVCS). The 106-residue stretch at 61–166 (TFNIQDGPDF…LEAFLKKLIG (106 aa)) folds into the Thioredoxin domain. Residues Cys-90 and Cys-93 each act as nucleophile in the active site. A disulfide bridge connects residues Cys-90 and Cys-93. Lys-152 is modified (N6-acetyllysine; alternate). Residue Lys-152 is modified to N6-succinyllysine; alternate.

The protein belongs to the thioredoxin family. In terms of assembly, monomer.

It is found in the mitochondrion. Its function is as follows. Important for the control of mitochondrial reactive oxygen species homeostasis, apoptosis regulation and cell viability. Is involved in various redox reactions including the reduction of protein disulfide bonds, through the reversible oxidation of its active center dithiol to a disulfide. This is Thioredoxin, mitochondrial (TXN2) from Bos taurus (Bovine).